The chain runs to 286 residues: Bifunctional protein FolD 2 (286 aa).

Residues 165-167 (GRG), Thr192, and Val233 each bind NADP(+).

Belongs to the tetrahydrofolate dehydrogenase/cyclohydrolase family. Homodimer.

It catalyses the reaction (6R)-5,10-methylene-5,6,7,8-tetrahydrofolate + NADP(+) = (6R)-5,10-methenyltetrahydrofolate + NADPH. It carries out the reaction (6R)-5,10-methenyltetrahydrofolate + H2O = (6R)-10-formyltetrahydrofolate + H(+). It functions in the pathway one-carbon metabolism; tetrahydrofolate interconversion. Functionally, catalyzes the oxidation of 5,10-methylenetetrahydrofolate to 5,10-methenyltetrahydrofolate and then the hydrolysis of 5,10-methenyltetrahydrofolate to 10-formyltetrahydrofolate. The sequence is that of Bifunctional protein FolD 2 from Rhodococcus jostii (strain RHA1).